We begin with the raw amino-acid sequence, 109 residues long: NAD(P)H-quinone oxidoreductase subunit M (109 aa).

Belongs to the complex I NdhM subunit family. As to quaternary structure, NDH-1 can be composed of about 15 different subunits; different subcomplexes with different compositions have been identified which probably have different functions.

It localises to the cellular thylakoid membrane. The catalysed reaction is a plastoquinone + NADH + (n+1) H(+)(in) = a plastoquinol + NAD(+) + n H(+)(out). It carries out the reaction a plastoquinone + NADPH + (n+1) H(+)(in) = a plastoquinol + NADP(+) + n H(+)(out). In terms of biological role, NDH-1 shuttles electrons from an unknown electron donor, via FMN and iron-sulfur (Fe-S) centers, to quinones in the respiratory and/or the photosynthetic chain. The immediate electron acceptor for the enzyme in this species is believed to be plastoquinone. Couples the redox reaction to proton translocation, and thus conserves the redox energy in a proton gradient. Cyanobacterial NDH-1 also plays a role in inorganic carbon-concentration. This chain is NAD(P)H-quinone oxidoreductase subunit M, found in Microcystis aeruginosa (strain NIES-843 / IAM M-2473).